The primary structure comprises 531 residues: Fe-S cluster assembly factor HCF101, chloroplastic (531 aa).

A chloroplast-targeting transit peptide spans 1 to 62 (MRNLRAAAPA…PRRVGRLRRR (62 aa)). A compositionally biased stretch (pro residues) spans 17–27 (APPLLLPPSTP). Residues 17-37 (APPLLLPPSTPTPRGAFSAKA) are disordered. The segment covering 28–37 (TPRGAFSAKA) has biased composition (low complexity). 181–188 (CKGGVGKS) contacts ATP.

It belongs to the Mrp/NBP35 ATP-binding proteins family. Requires [4Fe-4S] cluster as cofactor.

Its subcellular location is the plastid. It localises to the chloroplast stroma. Required for photosystem I (PSI) biosynthesis and assembly. May serve as a chloroplast scaffold protein that specifically assembles iron-sulfur (4Fe-4S) clusters and transfers them to the chloroplast PSI and ferredoxin-thioredoxin (FTR) complexes. Probably not required for assembly or stability of plastidic 2Fe-2S clusters. The polypeptide is Fe-S cluster assembly factor HCF101, chloroplastic (HCF101) (Oryza sativa subsp. japonica (Rice)).